We begin with the raw amino-acid sequence, 344 residues long: Enoyl-[acyl-carrier-protein] reductase, mitochondrial (344 aa).

Residues 1-14 (MLKVLSLRSALQRA) constitute a mitochondrion transit peptide. Tyrosine 69 (proton donor) is an active-site residue. Residues asparagine 142, 168–171 (NSAV), 191–193 (RSR), 255–258 (YGGM), 280–282 (FWM), and lysine 338 contribute to the NADP(+) site.

This sequence belongs to the zinc-containing alcohol dehydrogenase family. Quinone oxidoreductase subfamily. As to quaternary structure, homodimer.

It localises to the mitochondrion. The catalysed reaction is a 2,3-saturated acyl-[ACP] + NADP(+) = a (2E)-enoyl-[ACP] + NADPH + H(+). In terms of biological role, catalyzes the NADPH-dependent reduction of trans-2-enoyl thioesters in mitochondrial fatty acid synthesis (fatty acid synthesis type II). Fatty acid chain elongation in mitochondria uses acyl carrier protein (ACP) as an acyl group carrier, but the enzyme accepts both ACP and CoA thioesters as substrates in vitro. May provide the octanoyl chain used for lipoic acid biosynthesis, regulating protein lipoylation and mitochondrial respiratory activity. Involved in iron homeostasis; affecting Fe-S cluster assembly and ceramide metabolism. Required for proper morphology and bioenergetic functions of mitochondria. Required for maintenance of neurons. The sequence is that of Enoyl-[acyl-carrier-protein] reductase, mitochondrial from Caenorhabditis elegans.